The primary structure comprises 375 residues: Adiponectin receptor protein 1 (375 aa).

Positions 1–60 (MSSHKGSVVAQGNGAPASNREADTVELAELGPLLEEKGKRVIANPPKAEEEQTCPVPQEE) are disordered. Topologically, residues 1 to 136 (MSSHKGSVVA…SIFRIHTETG (136 aa)) are cytoplasmic. Residues 137–157 (NIWTHLLGFVLFLFLGILTML) traverse the membrane as a helical segment. Residues 158 to 170 (RPNMYFMAPLQEK) are Extracellular-facing. A helical membrane pass occupies residues 171–191 (VVFGMFFLGAVLCLSFSWLFH). His-191 contacts Zn(2+). The Cytoplasmic portion of the chain corresponds to 192–203 (TVYCHSEKVSRT). The chain crosses the membrane as a helical span at residues 204–224 (FSKLDYSGIALLIMGSFVPWL). The Extracellular segment spans residues 225 to 234 (YYSFYCSPQP). The helical transmembrane segment at 235–255 (RLIYLSIVCVLGISAIIVAQW) threads the bilayer. Residues 256-264 (DRFATPKHR) lie on the Cytoplasmic side of the membrane. A helical membrane pass occupies residues 265-285 (QTRAGVFLGLGLSGVVPTMHF). The Extracellular segment spans residues 286 to 298 (TIAEGFVKATTVG). A helical membrane pass occupies residues 299–319 (QMGWFFLMAVMYITGAGLYAA). Residues 320-337 (RIPERFFPGKFDIWFQSH) are Cytoplasmic-facing. His-337 and His-341 together coordinate Zn(2+). Residues 338–358 (QIFHVLVVAAAFVHFYGVSNL) traverse the membrane as a helical segment. Over 359 to 375 (QEFRYGLEGGCTDDTLL) the chain is Extracellular.

It belongs to the ADIPOR family. In terms of assembly, may form homooligomers and heterooligomers with ADIPOR2. Interacts with APPL2 (via BAR domain); hinders the accessibility of APPL1 to ADIPOR1; negatively regulates adiponectin signaling; ADIPOQ dissociates this interaction and facilitates the recruitment of APPL1 to ADIPOR1. Interacts with APPL1; ADIPOQ enhances this interaction; inhibites adiponectin-stimulated binding of APPL2 to ADIPOR1. In terms of tissue distribution, widely expressed. Highly expressed in heart and skeletal muscle. Expressed at intermediate level in brain, spleen, kidney, liver, placenta, lung and peripheral blood leukocytes. Weakly expressed in colon, thymus and small intestine.

It is found in the cell membrane. Its function is as follows. Receptor for ADIPOQ, an essential hormone secreted by adipocytes that regulates glucose and lipid metabolism. Required for normal glucose and fat homeostasis and for maintaining a normal body weight. ADIPOQ-binding activates a signaling cascade that leads to increased AMPK activity, and ultimately to increased fatty acid oxidation, increased glucose uptake and decreased gluconeogenesis. Has high affinity for globular adiponectin and low affinity for full-length adiponectin. This Homo sapiens (Human) protein is Adiponectin receptor protein 1.